Here is a 487-residue protein sequence, read N- to C-terminus: Glutamyl-tRNA(Gln) amidotransferase subunit A (487 aa).

Residues Lys80 and Ser155 each act as charge relay system in the active site. Ser179 acts as the Acyl-ester intermediate in catalysis.

It belongs to the amidase family. GatA subfamily. Heterotrimer of A, B and C subunits.

The catalysed reaction is L-glutamyl-tRNA(Gln) + L-glutamine + ATP + H2O = L-glutaminyl-tRNA(Gln) + L-glutamate + ADP + phosphate + H(+). Its function is as follows. Allows the formation of correctly charged Gln-tRNA(Gln) through the transamidation of misacylated Glu-tRNA(Gln) in organisms which lack glutaminyl-tRNA synthetase. The reaction takes place in the presence of glutamine and ATP through an activated gamma-phospho-Glu-tRNA(Gln). The protein is Glutamyl-tRNA(Gln) amidotransferase subunit A of Leptospira interrogans serogroup Icterohaemorrhagiae serovar Lai (strain 56601).